The primary structure comprises 48 residues: Probable antitoxin PhoAT (48 aa).

This sequence belongs to the PhoAT antitoxin family. As to quaternary structure, interacts with toxin PhoH2.

Probable antitoxin component of a type II toxin-antitoxin (TA) system. The probable cognate antitoxin is PhoAT; the toxin gene can be expressed in the absence of the antitoxin gene in M.smegmatis strain mc(2)155. This Mycolicibacterium smegmatis (strain ATCC 700084 / mc(2)155) (Mycobacterium smegmatis) protein is Probable antitoxin PhoAT.